The sequence spans 631 residues: Phosphomethylpyrimidine synthase (631 aa).

Substrate-binding positions include asparagine 239, methionine 268, tyrosine 297, histidine 333, 353–355, 394–397, and glutamate 433; these read SRG and DGLR. Zn(2+) is bound at residue histidine 437. Residue tyrosine 460 participates in substrate binding. Histidine 501 is a Zn(2+) binding site. Residues cysteine 581, cysteine 584, and cysteine 589 each coordinate [4Fe-4S] cluster.

Belongs to the ThiC family. In terms of assembly, homodimer. It depends on [4Fe-4S] cluster as a cofactor.

It catalyses the reaction 5-amino-1-(5-phospho-beta-D-ribosyl)imidazole + S-adenosyl-L-methionine = 4-amino-2-methyl-5-(phosphooxymethyl)pyrimidine + CO + 5'-deoxyadenosine + formate + L-methionine + 3 H(+). It functions in the pathway cofactor biosynthesis; thiamine diphosphate biosynthesis. Its function is as follows. Catalyzes the synthesis of the hydroxymethylpyrimidine phosphate (HMP-P) moiety of thiamine from aminoimidazole ribotide (AIR) in a radical S-adenosyl-L-methionine (SAM)-dependent reaction. The protein is Phosphomethylpyrimidine synthase of Escherichia coli O7:K1 (strain IAI39 / ExPEC).